An 832-amino-acid polypeptide reads, in one-letter code: MMEEEELEFVEELEAVLQLTPEVQLAIEQVFPSQDPLDRADFNAVEYINTLFPTEQSLANIDEVVNKIRLKIRRLDDNIRTVVRGQTNVGQDGRQALEEAQKAIQQLFGKIKDIKDKAEKSEQMVKEITRDIKQLDHAKRHLTTSITTLNHLHMLAGGVDSLEAMTRRRQYGEVANLLQGVMNVLEHFHKYMGIPQIRQLSERVKAAQTELGQQILADFEEAFPSQGTKRPGGPSNVLRDACLVANILDPRIKQEIIKKFIKQHLSEYLVLFQENQDVAWLDKIDRRYAWIKRQLVDYEEKYGRMFPREWCMAERIAVEFCHVTRTELAKIMRTRAKEIEVKLLLFAIQRTTNFEGFLAKRFSGCTLTDGTLKKLESPPPSTNPFLEDEPTPEMEELATEKGDLDQPKKPKAPDNPFHGIVSKCFEPHLYVYIESQDKNLGELIDRFVADFKAQGPPKPNTDEGGAVLPSCADLFVYYKKCMVQCSQLSTGEPMIALTTIFQKYLREYAWKILSGNLPKTTTSSGGLTISSLLKEKEGSEVAKFTLEELCLICSILSTAEYCLATTQQLEEKLKEKVDVSLIERINLTGEMDTFSTVISSSIQLLVQDLDAACDPALTAMSKMQWQNVEHVGDQSPYVTSVILHIKQNVPIIRDNLASTRKYFTQFCIKFANSFIPKFITHLFKCKPISMVGAEQLLLDTHSLKMVLLDLPSIGSQVVRKAPASYTKIVVKGMTRAEMILKVVMAPHEPLVVFVDNYIKLLTDCNTETFQKILDMKGLKRSEQSSMLELLRQRLPAPPSGAESSGSLSLMAPTPEQESSRIRKLEKLIKKRL.

The stretch at 97 to 138 (LEEAQKAIQQLFGKIKDIKDKAEKSEQMVKEITRDIKQLDHA) forms a coiled coil. Residues Lys-110 and Lys-360 each carry the N6-acetyllysine modification. Residues 373-412 (KKLESPPPSTNPFLEDEPTPEMEELATEKGDLDQPKKPKA) are disordered. Ser-377 is subject to Phosphoserine. The span at 386 to 397 (LEDEPTPEMEEL) shows a compositional bias: acidic residues. Thr-391 is subject to Phosphothreonine. Over residues 398 to 412 (ATEKGDLDQPKKPKA) the composition is skewed to basic and acidic residues. A Phosphoserine modification is found at Ser-580. Residues 794–822 (LPAPPSGAESSGSLSLMAPTPEQESSRIR) are disordered. Positions 799-809 (SGAESSGSLSL) are enriched in low complexity.

The protein belongs to the VPS53 family. Component of the Golgi-associated retrograde protein (GARP) complex, also called VFT (VPS fifty-three) complex, composed of VPS51, VPS52, VPS53 and VPS54. Component of the endosome-associated retrograde protein (EARP) complex, composed of VPS51, VPS52, VPS53 and VPS50/Syndetin. EIPR1 interacts with both EARP and GARP complexes and mediates the recruitment of the GARP complex to the trans-Golgi network. Interacts with VPS50 in an EIPR1-independent manner.

The protein resides in the golgi apparatus. It localises to the trans-Golgi network membrane. It is found in the endosome membrane. Its subcellular location is the recycling endosome. Acts as a component of the GARP complex that is involved in retrograde transport from early and late endosomes to the trans-Golgi network (TGN). The GARP complex is required for the maintenance of the cycling of mannose 6-phosphate receptors between the TGN and endosomes, this cycling is necessary for proper lysosomal sorting of acid hydrolases such as CTSD. Acts as a component of the EARP complex that is involved in endocytic recycling. The EARP complex associates with Rab4-positive endosomes and promotes recycling of internalized transferrin receptor (TFRC) to the plasma membrane. This is Vacuolar protein sorting-associated protein 53 homolog (VPS53) from Pongo abelii (Sumatran orangutan).